The chain runs to 161 residues: MKNVAYLLDPETTLFRTVEVADGTGLAPIFSLLGCRLVQMIRFDDSHALFLDDEGLRDGITAFTVFASYPQPLGGKIVLIRGDGSEPHFSPSIKIEDAAVHFKCCRPVLDPVFVTADDATPKGLILPGALADLKVRIEQRPPMLMDGRHDVYRARGDGLNS.

This sequence to R.leguminosarum PsiB.

This is an uncharacterized protein from Sinorhizobium fredii (strain NBRC 101917 / NGR234).